We begin with the raw amino-acid sequence, 201 residues long: Akirin (201 aa).

The disordered stretch occupies residues 1-133 (MACATLKRAL…PRRPDSPQNL (133 aa)). The Nuclear localization signal motif lies at 20–25 (PKRRRC). Phosphoserine occurs at positions 39 and 41. 2 stretches are compositionally biased toward polar residues: residues 44–57 (GPST…TPSN) and 65–75 (EPSPFSESSLA). At Ser-67 the chain carries Phosphoserine. Positions 112–122 (SESSGSEMGPE) are enriched in low complexity. Residues Ser-123 and Ser-129 each carry the phosphoserine modification.

Belongs to the akirin family. Interacts with dmap1. Interacts with bap60 and rel; interaction is immune stimulation-dependent; activates selected rel target gene promoters. Interacts with bap55; interaction is immune stimulation-dependent. Interacts with twi. Polyubiquitinated via 'Lys-63'-linked ubiquitin by Hyd, promoting interaction with rel. As to expression, ubiquitous.

It localises to the nucleus. Molecular adapter that acts as a bridge between a variety of multiprotein complexes, and which is required for embryonic development and for normal innate immune response. Acts as a regulator of embryonic myogenesis by bridging Twist (twi) with the SWI/SNF-like Brahma complex, promoting expression of twi-regulated genes during myogenesis. Effector of immune deficiency pathway (Imd) by acting either downstream of, or at the level of, the NF-kappa-B factor Relish (Rel). Acts by bridging the NF-kappa-B factor Rel and the Brahma complex through bap60 interaction, leading to activation a subset of NF-kappa-B factor Relish (Rel) effector genes. Not part of the Toll pathway. Required for the formation of the heart by promoting expression ot tinman (tin). In Drosophila melanogaster (Fruit fly), this protein is Akirin.